A 291-amino-acid chain; its full sequence is Protease HtpX (291 aa).

2 consecutive transmembrane segments (helical) span residues 4–24 (IALF…VLNI) and 36–56 (LSGL…ISLM). His143 provides a ligand contact to Zn(2+). Glu144 is an active-site residue. His147 contacts Zn(2+). 2 consecutive transmembrane segments (helical) span residues 151–171 (GDMI…IFLS) and 199–219 (FIVS…LTMW). Glu225 contacts Zn(2+).

The protein belongs to the peptidase M48B family. The cofactor is Zn(2+).

It localises to the cell inner membrane. The chain is Protease HtpX from Aliivibrio fischeri (strain ATCC 700601 / ES114) (Vibrio fischeri).